A 248-amino-acid chain; its full sequence is 2,3-bisphosphoglycerate-dependent phosphoglycerate mutase (248 aa).

Substrate-binding positions include 8-15 (RHGESTWN), 21-22 (TG), Arg60, 87-90 (ERHY), Lys98, 114-115 (RR), and 183-184 (GN). Catalysis depends on His9, which acts as the Tele-phosphohistidine intermediate. Catalysis depends on Glu87, which acts as the Proton donor/acceptor.

The protein belongs to the phosphoglycerate mutase family. BPG-dependent PGAM subfamily.

The catalysed reaction is (2R)-2-phosphoglycerate = (2R)-3-phosphoglycerate. It participates in carbohydrate degradation; glycolysis; pyruvate from D-glyceraldehyde 3-phosphate: step 3/5. Functionally, catalyzes the interconversion of 2-phosphoglycerate and 3-phosphoglycerate. This chain is 2,3-bisphosphoglycerate-dependent phosphoglycerate mutase, found in Solibacter usitatus (strain Ellin6076).